Consider the following 23-residue polypeptide: Protein male-specific 40 (23 aa).

In terms of tissue distribution, during early embryogenesis expression is initially detected at the early cleavage stages in the nucleus of two discrete cells. Subsequently, expression is abundant in the cytoplasm of the newly formed pole cells. Male-specific expression during the third larval instar.

It localises to the cytoplasm. Its subcellular location is the nucleus. This is Protein male-specific 40 from Drosophila melanogaster (Fruit fly).